The sequence spans 148 residues: UPF0756 membrane protein YeaL (148 aa).

The next 4 membrane-spanning stretches (helical) occupy residues 14-34, 51-71, 86-106, and 121-141; these read ALGFISHNTTVAVSILVLIIV, LSIGIIILTIGVMAPIASGTL, LVAIAVGVIVSWLGGRGVTLM, and VLGVALFRGVPVGPLIAAGLV.

Belongs to the UPF0756 family.

It is found in the cell membrane. In Shigella flexneri, this protein is UPF0756 membrane protein YeaL.